A 424-amino-acid polypeptide reads, in one-letter code: UPF0415 protein C7orf25 homolog (424 aa).

It belongs to the UPF0415 family.

This chain is UPF0415 protein C7orf25 homolog, found in Xenopus tropicalis (Western clawed frog).